We begin with the raw amino-acid sequence, 275 residues long: Secreted RxLR effector protein 153 (275 aa).

A signal peptide spans 1–27 (MRNRAFLFGLFFIEYACLVLFAAPTRA). N-linked (GlcNAc...) asparagine glycosylation occurs at N45. The short motif at 48–63 (RTLQADDSKRISAEER) is the RxLR-dEER element.

This sequence belongs to the RxLR effector family.

It localises to the secreted. Its subcellular location is the host cell membrane. Functionally, secreted effector that completely suppresses the host cell death induced by cell death-inducing proteins. In Plasmopara viticola (Downy mildew of grapevine), this protein is Secreted RxLR effector protein 153.